The following is a 401-amino-acid chain: 8-amino-7-oxononanoate synthase (401 aa).

Arginine 19 contacts substrate. Glycine 106–tyrosine 107 is a pyridoxal 5'-phosphate binding site. Histidine 131 is a substrate binding site. 3 residues coordinate pyridoxal 5'-phosphate: serine 176, histidine 204, and threonine 233. Lysine 236 carries the post-translational modification N6-(pyridoxal phosphate)lysine. Threonine 350 provides a ligand contact to substrate.

Belongs to the class-II pyridoxal-phosphate-dependent aminotransferase family. BioF subfamily. Homodimer. Pyridoxal 5'-phosphate is required as a cofactor.

The catalysed reaction is 6-carboxyhexanoyl-[ACP] + L-alanine + H(+) = (8S)-8-amino-7-oxononanoate + holo-[ACP] + CO2. It participates in cofactor biosynthesis; biotin biosynthesis. In terms of biological role, catalyzes the decarboxylative condensation of pimeloyl-[acyl-carrier protein] and L-alanine to produce 8-amino-7-oxononanoate (AON), [acyl-carrier protein], and carbon dioxide. The chain is 8-amino-7-oxononanoate synthase from Pseudomonas aeruginosa (strain LESB58).